The chain runs to 460 residues: N-myc proto-oncogene protein (460 aa).

Residues 19–47 (LEFDSLQPCFYPDEDDFYFGGPDSTPPGE) form an interaction with AURKA region. The tract at residues 61–90 (LSPSRAFSEQSPEPSDWATEMLLPEADLWG) is interaction with AURKA and FBXW7. A 9aaTAD motif is present at residues 76 to 85 (DWATEMLLPE). Disordered stretches follow at residues 131-169 (VSEK…GAGR), 221-288 (AAAP…SNSK), and 330-388 (APSP…LERQ). The span at 138–158 (GRGPPAAGPATPGAGAANPAG) shows a compositional bias: low complexity. A compositionally biased stretch (gly residues) spans 159 to 169 (RGHGGTAGAGR). A compositionally biased stretch (low complexity) spans 221 to 233 (AAAPASAAVAAPP). Positions 255–274 (TLSDSDDEDDEEEDEEEEID) are enriched in acidic residues. Ser257 and Ser259 each carry phosphoserine; by CK2. One can recognise a bHLH domain in the interval 377–429 (ERRRNHNILERQRRNDLRSSFLTLRDHVPELVKNEKAAKVVILKKATEYVHSL). The interval 429-450 (LQAEEHQLLLEKEKLQARQQQL) is leucine-zipper.

In terms of assembly, efficient DNA binding requires dimerization with another bHLH protein. Binds DNA as a heterodimer with MAX. Interacts with KDM5A, KDM5B and HUWE1. Interacts with MYCNOS. Interacts with AURKA; interaction is phospho-independent and triggers AURKA activation; AURKA competes with FBXW7 for binding to unphosphorylated MYCN but not for binding to unphosphorylated MYCN. Interacts with FBXW7; FBXW7 competes with AURKA for binding to unphosphorylated MYCN but not for binding to phosphorylated MYCN. Post-translationally, phosphorylated by GSK3-beta which may promote its degradation. Phosphorylated by AURKA.

It is found in the nucleus. Functionally, positively regulates the transcription of MYCNOS in neuroblastoma cells. In Marmota monax (Woodchuck), this protein is N-myc proto-oncogene protein (MYCN).